Reading from the N-terminus, the 146-residue chain is Hemoglobin subunit beta (146 aa).

At V1 the chain carries N-acetylvaline. In terms of domain architecture, Globin spans 2–146 (HLSGEEKAAV…VANALAHKYH (145 aa)). T12 bears the Phosphothreonine mark. S44 carries the post-translational modification Phosphoserine. K59 carries the post-translational modification N6-acetyllysine. H63 provides a ligand contact to heme b. K82 carries the N6-acetyllysine modification. H92 is a binding site for heme b. Position 93 is an S-nitrosocysteine (C93). K144 is modified (N6-acetyllysine).

This sequence belongs to the globin family. In terms of assembly, heterotetramer of two alpha chains and two beta chains. As to expression, red blood cells.

Functionally, involved in oxygen transport from the lung to the various peripheral tissues. This is Hemoglobin subunit beta (HBB) from Tupaia glis (Common tree shrew).